The chain runs to 316 residues: GTPase Era (316 aa).

Positions 9–190 (RAGFAAIIGA…TAKLVSMMPE (182 aa)) constitute an Era-type G domain. Residues 17–24 (GAPNAGKS) form a G1 region. Residue 17-24 (GAPNAGKS) participates in GTP binding. The tract at residues 43–47 (QTTRF) is G2. The segment at 64–67 (DTPG) is G3. Residues 64-68 (DTPGI) and 140-143 (NKID) contribute to the GTP site. A G4 region spans residues 140 to 143 (NKID). The tract at residues 169-171 (ISA) is G5. The 78-residue stretch at 221–298 (VHEELPYAAT…HLFLHVKVKE (78 aa)) folds into the KH type-2 domain.

It belongs to the TRAFAC class TrmE-Era-EngA-EngB-Septin-like GTPase superfamily. Era GTPase family. As to quaternary structure, monomer.

The protein localises to the cytoplasm. Its subcellular location is the cell inner membrane. Functionally, an essential GTPase that binds both GDP and GTP, with rapid nucleotide exchange. Plays a role in 16S rRNA processing and 30S ribosomal subunit biogenesis and possibly also in cell cycle regulation and energy metabolism. This Caulobacter vibrioides (strain ATCC 19089 / CIP 103742 / CB 15) (Caulobacter crescentus) protein is GTPase Era.